A 271-amino-acid chain; its full sequence is Methylthioribulose-1-phosphate dehydratase (271 aa).

C123 serves as a coordination point for substrate. Zn(2+) contacts are provided by H141 and H143. E166 acts as the Proton donor/acceptor in catalysis. H231 serves as a coordination point for Zn(2+).

The protein belongs to the aldolase class II family. MtnB subfamily. Zn(2+) is required as a cofactor.

The protein resides in the cytoplasm. The enzyme catalyses 5-(methylsulfanyl)-D-ribulose 1-phosphate = 5-methylsulfanyl-2,3-dioxopentyl phosphate + H2O. It functions in the pathway amino-acid biosynthesis; L-methionine biosynthesis via salvage pathway; L-methionine from S-methyl-5-thio-alpha-D-ribose 1-phosphate: step 2/6. In terms of biological role, catalyzes the dehydration of methylthioribulose-1-phosphate (MTRu-1-P) into 2,3-diketo-5-methylthiopentyl-1-phosphate (DK-MTP-1-P). In Candida dubliniensis (strain CD36 / ATCC MYA-646 / CBS 7987 / NCPF 3949 / NRRL Y-17841) (Yeast), this protein is Methylthioribulose-1-phosphate dehydratase.